Reading from the N-terminus, the 244-residue chain is 7-cyano-7-deazaguanine synthase (244 aa).

ATP is bound at residue 14–24 (FSGGQDSATCV). Positions 202, 217, 220, and 223 each coordinate Zn(2+).

It belongs to the QueC family. The cofactor is Zn(2+).

It carries out the reaction 7-carboxy-7-deazaguanine + NH4(+) + ATP = 7-cyano-7-deazaguanine + ADP + phosphate + H2O + H(+). It participates in purine metabolism; 7-cyano-7-deazaguanine biosynthesis. In terms of biological role, catalyzes the ATP-dependent conversion of 7-carboxy-7-deazaguanine (CDG) to 7-cyano-7-deazaguanine (preQ(0)). The protein is 7-cyano-7-deazaguanine synthase of Burkholderia multivorans (strain ATCC 17616 / 249).